Here is a 445-residue protein sequence, read N- to C-terminus: Anaerobilin synthase (445 aa).

Residues 52–287 (TASPRKRLVY…LQGCDFMDDA (236 aa)) enclose the Radical SAM core domain. Y61 lines the S-adenosyl-L-methionine pocket. C67 and C71 together coordinate [4Fe-4S] cluster. F73 contacts S-adenosyl-L-methionine. [4Fe-4S] cluster is bound at residue C74. S-adenosyl-L-methionine contacts are provided by residues G118, 119-120 (GT), E151, Q178, R190, and D215.

The protein belongs to the anaerobic coproporphyrinogen-III oxidase family. ChuW/HutW subfamily. [4Fe-4S] cluster is required as a cofactor.

It catalyses the reaction 2 reduced [flavodoxin] + heme b + 2 S-adenosyl-L-methionine = anaerobilin + 2 oxidized [flavodoxin] + Fe(2+) + 5'-deoxyadenosine + L-methionine + S-adenosyl-L-homocysteine. Its activity is regulated as follows. Inhibited by exposure to molecular oxygen. In terms of biological role, involved in heme degradation and iron utilization under anaerobic conditions. Catalyzes a radical-mediated mechanism facilitating iron liberation and the production of the tetrapyrrole product anaerobilin. Can use heme, mesoheme and deuteroheme as substrates. The chain is Anaerobilin synthase from Escherichia coli O157:H7.